A 215-amino-acid chain; its full sequence is 3-isopropylmalate dehydratase small subunit (215 aa).

The protein belongs to the LeuD family. LeuD type 1 subfamily. In terms of assembly, heterodimer of LeuC and LeuD.

It catalyses the reaction (2R,3S)-3-isopropylmalate = (2S)-2-isopropylmalate. The protein operates within amino-acid biosynthesis; L-leucine biosynthesis; L-leucine from 3-methyl-2-oxobutanoate: step 2/4. Catalyzes the isomerization between 2-isopropylmalate and 3-isopropylmalate, via the formation of 2-isopropylmaleate. The protein is 3-isopropylmalate dehydratase small subunit of Marinobacter nauticus (strain ATCC 700491 / DSM 11845 / VT8) (Marinobacter aquaeolei).